The sequence spans 177 residues: NADH-quinone oxidoreductase subunit B (177 aa).

4 residues coordinate [4Fe-4S] cluster: Cys56, Cys57, Cys121, and Cys151.

The protein belongs to the complex I 20 kDa subunit family. NDH-1 is composed of 14 different subunits. Subunits NuoB, C, D, E, F, and G constitute the peripheral sector of the complex. The cofactor is [4Fe-4S] cluster.

Its subcellular location is the cell inner membrane. The catalysed reaction is a quinone + NADH + 5 H(+)(in) = a quinol + NAD(+) + 4 H(+)(out). Functionally, NDH-1 shuttles electrons from NADH, via FMN and iron-sulfur (Fe-S) centers, to quinones in the respiratory chain. Couples the redox reaction to proton translocation (for every two electrons transferred, four hydrogen ions are translocated across the cytoplasmic membrane), and thus conserves the redox energy in a proton gradient. In Roseobacter denitrificans (strain ATCC 33942 / OCh 114) (Erythrobacter sp. (strain OCh 114)), this protein is NADH-quinone oxidoreductase subunit B.